Consider the following 254-residue polypeptide: 3-deoxy-manno-octulosonate cytidylyltransferase (254 aa).

It belongs to the KdsB family.

It localises to the cytoplasm. It catalyses the reaction 3-deoxy-alpha-D-manno-oct-2-ulosonate + CTP = CMP-3-deoxy-beta-D-manno-octulosonate + diphosphate. The protein operates within nucleotide-sugar biosynthesis; CMP-3-deoxy-D-manno-octulosonate biosynthesis; CMP-3-deoxy-D-manno-octulosonate from 3-deoxy-D-manno-octulosonate and CTP: step 1/1. It functions in the pathway bacterial outer membrane biogenesis; lipopolysaccharide biosynthesis. Activates KDO (a required 8-carbon sugar) for incorporation into bacterial lipopolysaccharide in Gram-negative bacteria. The sequence is that of 3-deoxy-manno-octulosonate cytidylyltransferase from Ectopseudomonas mendocina (strain ymp) (Pseudomonas mendocina).